A 207-amino-acid polypeptide reads, in one-letter code: Guanylate kinase (207 aa).

One can recognise a Guanylate kinase-like domain in the interval 4 to 184; it reads GILFIISAPS…AINDLRTIII (181 aa). 11 to 18 lines the ATP pocket; sequence APSGTGKS.

This sequence belongs to the guanylate kinase family.

It is found in the cytoplasm. It carries out the reaction GMP + ATP = GDP + ADP. Its function is as follows. Essential for recycling GMP and indirectly, cGMP. This is Guanylate kinase from Buchnera aphidicola subsp. Schizaphis graminum (strain Sg).